A 1388-amino-acid polypeptide reads, in one-letter code: MKDLMTSYSFTEKKRIRKDFGKHRSILKVPFLLAIQVDSYRAFLQGDVESSQRKDIGLHGALKSVFPIVSYSGNAALEYVGYKLGEPMFDERECRQRGMSYGAPLRVTVRLVIYDRESSTKAVKYIKEQEVYLGEIPLMTENGTFIVNGTERVIVSQLHRSPGVFFDHDRGKTHSSGKLLYSARIIPCRGSWLDFEFDPKDALFTRIDRRRKLPVSILLRALGYSNEEILGEFFEINTFHINPDEGVQLELVPERLRGEILSFNLTDGGSVIVEAGKRITARHVKQLEASGISALAVPDEYLIGRILSHDVIDATTGELLASANSEVNEDRIIAFRKAGIESVGTLWVNDLDRGAYLSNTLRIDPTRTQLEAQVEIYRMMRPGEPPTKEAAQNLFHNLFFTFDRYDLSMVGRMKFNRRVGRKEVAGEPVLYDKKYFSDRNDEESRRLVSKLGETSDILDVIKGLCEIRNGRGVVDDIDHLGNRRVRSVGEMAENVFRVGLVRVERAVKERLSMAESEGLTPQELINAKPVAAAIKEFFGSSQLSQFMDQNNPLSEVTHKRRLSALGPGGLTRERAGFEVRDVHLSHYGCLCTIETPEGPNIGLINSLAVFARTNQYGFLETPYRKVVEGRVTDEVEYLSAIEENQYVIAQANTLTDDNGQLTESFVPCRFQGESLLKPPSYVHYMDVSPMQTVSVAAALVPFLEHDDANRALMGANMQRQAVPTLRAQKPLVGTGIERTVARDSGVTVNARRGGVIDQVDAGRIVVKVNESEIIGATDAGVDIYGLIKYTRSNQNTCINQRPLVNVGDIVASGDVLADGPSTDIGELALGQNMLIAFMPWNGYNFEDSILLSERVVEEDRYTTIHIEELTCIARDTKLGSEEISADIPNVSEQALNRLDESGVVYIGAEVRAGDILVGKVTPKGESQLTPEEKLLRAIFGEKASDVKDSSLRVPPGMDGTVIDVQVFTRDGIEKDKRAHQIEEYEIKRVKKDFDDQFRILEGAIYARLRSQIVGKVVNSGVDIKKGEVITDPYLDGLKKSDWFALRMKDEVAVEAIDRAQKQIQAYQKEFDQRFSDKRSKITQGDDLAPGVLKMVKVFLAVKRCIQCGDKMAGRHGNKGVISNVVPVEDMPFMEDGTPVDIVLNPLGVPSRMNIGQILEVHLGWAAKGLGHRIQRMLEANAAIADLRKFLNEIYNHDKSLVGERVDLSQFSDDELLNMAKNLTDGVPMASPVFDGASEQEIKRMLDLAELPAGGQTQLYDGHTGEPFDRKTTVGYMHYLKLNHLVDDKMHARSTGPYSLVTQQPLGGKAQFGGQRFGEMEVWALEAYGAAYTLQEMLTVKSDDVQGRNQMYKNIVDGDHQMVAGMPESFNVLVKEIRSLAINIELEDN.

The protein belongs to the RNA polymerase beta chain family. The RNAP catalytic core consists of 2 alpha, 1 beta, 1 beta' and 1 omega subunit. When a sigma factor is associated with the core the holoenzyme is formed, which can initiate transcription.

It catalyses the reaction RNA(n) + a ribonucleoside 5'-triphosphate = RNA(n+1) + diphosphate. Its function is as follows. DNA-dependent RNA polymerase catalyzes the transcription of DNA into RNA using the four ribonucleoside triphosphates as substrates. The sequence is that of DNA-directed RNA polymerase subunit beta from Xylella fastidiosa (strain Temecula1 / ATCC 700964).